The chain runs to 336 residues: ATP-dependent 6-phosphofructokinase (336 aa).

Gly11 lines the ATP pocket. 21-25 contributes to the ADP binding site; that stretch reads RAVVR. ATP is bound by residues 72–73 and 102–105; these read RY and GDGS. Asp103 is a binding site for Mg(2+). 125–127 contributes to the substrate binding site; it reads TID. Residue Asp127 is the Proton acceptor of the active site. Arg154 contacts ADP. Substrate-binding positions include Arg162 and 169–171; that span reads MGR. ADP contacts are provided by residues 185-187, Lys211, and 213-215; these read GAD and KKH. Residues Glu222, Arg244, and 250–253 each bind substrate; that span reads HIQR.

It belongs to the phosphofructokinase type A (PFKA) family. ATP-dependent PFK group I subfamily. Prokaryotic clade 'B1' sub-subfamily. In terms of assembly, homotetramer. The cofactor is Mg(2+).

The protein localises to the cytoplasm. It carries out the reaction beta-D-fructose 6-phosphate + ATP = beta-D-fructose 1,6-bisphosphate + ADP + H(+). Its pathway is carbohydrate degradation; glycolysis; D-glyceraldehyde 3-phosphate and glycerone phosphate from D-glucose: step 3/4. Allosterically activated by ADP and other diphosphonucleosides, and allosterically inhibited by phosphoenolpyruvate. Functionally, catalyzes the phosphorylation of D-fructose 6-phosphate to fructose 1,6-bisphosphate by ATP, the first committing step of glycolysis. This is ATP-dependent 6-phosphofructokinase from Streptococcus sanguinis (strain SK36).